The chain runs to 335 residues: Probable cytosolic iron-sulfur protein assembly protein Ciao1 (335 aa).

WD repeat units lie at residues 12–51 (GHKG…WGTK), 57–96 (GHKR…FECN), 101–140 (GHEN…EFEC), 146–185 (PHTQ…NDWD), 192–231 (SHTS…NTAG), 250–289 (QHSR…KPDE), and 301–335 (AHDQ…KVSE).

This sequence belongs to the WD repeat CIA1 family.

Essential component of the cytosolic iron-sulfur (Fe/S) protein assembly machinery. Required for the maturation of extramitochondrial Fe/S proteins. This chain is Probable cytosolic iron-sulfur protein assembly protein Ciao1, found in Drosophila sechellia (Fruit fly).